Consider the following 410-residue polypeptide: MFSIFNSPCVFEQLPSFSQPLHSRYFDCSSPVSYYPECKRRKAIKANLRAPKKSDANCSEPLRYALAETPNGYTLSLSKRIPYELFSKYVNEKLGELKENHYRPTYHVVQDFFGNQYYVEDEADEDALLRSALKDLDFRAIGKKIAKDLFQDYEIELNHRGDELSILSKKDKIFKEFSLDQVFEDVFVIGCGVENIDDGSREKYALLKIGLVKHEEEISEGGINEPKMPIIESKIDESHDDVNMSESLKEEEAEKAKEPLTKEDQIKKWIEEERLMQEESRKSEQEKAAKEDEERQKKEKEARLKARKESLINKQKTKRSQQKKLQNSKSLPISEIEASNKNNNSNSGSAESDNESINSDSDTTLDFSVSGNTLKKHASPLLEDVEDEEVDRYNESLSRSPKGNSIIEEI.

2 disordered regions span residues 223-264 (INEP…TKED) and 276-410 (MQEE…IEEI). Composition is skewed to basic and acidic residues over residues 233–264 (SKID…TKED) and 276–311 (MQEE…KESL). Positions 243–330 (NMSESLKEEE…QQKKLQNSKS (88 aa)) form a coiled coil. A compositionally biased stretch (low complexity) spans 334-362 (SEIEASNKNNNSNSGSAESDNESINSDSD). Over residues 364 to 373 (TLDFSVSGNT) the composition is skewed to polar residues.

As to quaternary structure, interacts with RHB1, IST2, TDA3 and YIF1.

The protein resides in the cytoplasm. Its subcellular location is the late endosome. In terms of biological role, V-SNARE binding protein that facilitates specific protein retrieval from a late endosome to the Golgi. Modulates the rate of arginine uptake. Involved in pH homeostasis. Required for the correct localization of IST2. May be involved in ion homeostasis together with IST2. The chain is Protein BTN2 (BTN2) from Saccharomyces cerevisiae (strain ATCC 204508 / S288c) (Baker's yeast).